Reading from the N-terminus, the 345-residue chain is N-acetyl-gamma-glutamyl-phosphate reductase (345 aa).

Residue C149 is part of the active site.

This sequence belongs to the NAGSA dehydrogenase family. Type 1 subfamily.

The protein resides in the cytoplasm. It carries out the reaction N-acetyl-L-glutamate 5-semialdehyde + phosphate + NADP(+) = N-acetyl-L-glutamyl 5-phosphate + NADPH + H(+). It functions in the pathway amino-acid biosynthesis; L-arginine biosynthesis; N(2)-acetyl-L-ornithine from L-glutamate: step 3/4. In terms of biological role, catalyzes the NADPH-dependent reduction of N-acetyl-5-glutamyl phosphate to yield N-acetyl-L-glutamate 5-semialdehyde. The protein is N-acetyl-gamma-glutamyl-phosphate reductase of Geobacillus sp. (strain WCH70).